Consider the following 1304-residue polypeptide: NAD-dependent protein deacetylase Sir2B (1304 aa).

A Deacetylase sirtuin-type domain is found at 28 to 466 (TEEEKKKVKE…LISIHNIKMK (439 aa)). NAD(+) is bound by residues 53–72 (GAGI…TGIW) and 274–277 (QNID). Catalysis depends on H294, which acts as the Proton acceptor. Zn(2+) contacts are provided by C302, C305, C327, and C330. NAD(+) is bound by residues 371 to 373 (GSS), 399 to 401 (NYQ), and V417. 3 disordered regions span residues 545-585 (EHNN…SSSI), 749-827 (KVKS…DKDN), and 1154-1203 (EIKY…DDNN). 3 stretches are compositionally biased toward low complexity: residues 548–585 (NNNN…SSSI), 756–806 (NNNN…ISDH), and 1182–1203 (DDNN…DDNN).

It belongs to the sirtuin family. Class IV subfamily. The cofactor is Zn(2+).

The catalysed reaction is N(6)-acetyl-L-lysyl-[protein] + NAD(+) + H2O = 2''-O-acetyl-ADP-D-ribose + nicotinamide + L-lysyl-[protein]. In terms of biological role, regulates the expression of the surface antigen-coding var genes central to the malaria pathogenesis. Cooperates with Sir2A to mediate silencing and mutual exclusive expression of only 1 of the 60 subtelomeric var genes at a time, coding for functionally different but epitopically variant versions of the erythrocyte membrane protein 1 (PfEMP1) molecule, to evade the detection by host immune surveillance. This is NAD-dependent protein deacetylase Sir2B from Plasmodium falciparum (isolate 3D7).